The primary structure comprises 75 residues: Large ribosomal subunit protein bL31 (75 aa).

It belongs to the bacterial ribosomal protein bL31 family. Type A subfamily. As to quaternary structure, part of the 50S ribosomal subunit.

Its function is as follows. Binds the 23S rRNA. This chain is Large ribosomal subunit protein bL31, found in Rhodopseudomonas palustris (strain BisB18).